Consider the following 103-residue polypeptide: Putative double-stranded DNA mimic protein HD_0986 (103 aa).

Belongs to the putative dsDNA mimic protein family.

In terms of biological role, may act as a double-stranded DNA (dsDNA) mimic. Probably regulates the activity of a dsDNA-binding protein. This Haemophilus ducreyi (strain 35000HP / ATCC 700724) protein is Putative double-stranded DNA mimic protein HD_0986.